Reading from the N-terminus, the 172-residue chain is Type IV secretion system putative outer membrane lipoprotein BAB2_0057 (172 aa).

Positions 1-15 (MRTLVMVACAVSLAA) are cleaved as a signal peptide. Cys-16 is lipidated: N-palmitoyl cysteine. Cys-16 carries S-diacylglycerol cysteine lipidation. Residues 58 to 172 (WPARPPKQTV…RRVDIEILRK (115 aa)) enclose the OmpA-like domain.

It localises to the cell outer membrane. The virB operon is essential for intracellular survival and is not involved in the invasion process. Constitutes a major determinant of virulence in mice. This protein is essential for pathogenesis in mice but is not required for intracellular survival. This chain is Type IV secretion system putative outer membrane lipoprotein BAB2_0057, found in Brucella abortus (strain 2308).